The sequence spans 92 residues: Dynein light chain 1, cytoplasmic (92 aa).

Belongs to the dynein light chain family. As to quaternary structure, homodimer. Cytoplasmic dynein consists of two catalytic heavy chains (HCs) and a number of non-catalytic subunits which present intermediate chains (ICs), light intermediate chains (LICs) and light chains (LCs). Component of the nuclear pore complex (NPC). NPC constitutes the exclusive means of nucleocytoplasmic transport. NPCs allow the passive diffusion of ions and small molecules and the active, nuclear transport receptor-mediated bidirectional transport of macromolecules such as proteins, RNAs, ribonucleoparticles (RNPs), and ribosomal subunits across the nuclear envelope. Due to its 8-fold rotational symmetry, all subunits are present with 8 copies or multiples thereof. Part of the NUP82 subcomplex. In the complex, interacts directly with Nup159.

The protein resides in the cytoplasm. Its subcellular location is the cytoskeleton. It localises to the nucleus. It is found in the nuclear pore complex. Its function is as follows. Acts as one of several non-catalytic accessory components of the cytoplasmic dynein complex that are thought to be involved in linking dynein to cargos and to adapter proteins that regulate dynein function. Cytoplasmic dynein 1 acts as a motor for the intracellular retrograde motility of vesicles and organelles along microtubules. May play a role in changing or maintaining the spatial distribution of cytoskeletal structures. Also a component of the nuclear pore complex where it may contribute to the stable association of the Nup82 subcomplex with the NPC. This is Dynein light chain 1, cytoplasmic (DYN2) from Saccharomyces cerevisiae (strain ATCC 204508 / S288c) (Baker's yeast).